The primary structure comprises 309 residues: tRNA dimethylallyltransferase (309 aa).

Residue glycine 10–threonine 17 participates in ATP binding. A substrate-binding site is contributed by threonine 12–threonine 17. The segment at aspartate 35 to glutamine 38 is interaction with substrate tRNA.

The protein belongs to the IPP transferase family. Monomer. The cofactor is Mg(2+).

The enzyme catalyses adenosine(37) in tRNA + dimethylallyl diphosphate = N(6)-dimethylallyladenosine(37) in tRNA + diphosphate. Its function is as follows. Catalyzes the transfer of a dimethylallyl group onto the adenine at position 37 in tRNAs that read codons beginning with uridine, leading to the formation of N6-(dimethylallyl)adenosine (i(6)A). The sequence is that of tRNA dimethylallyltransferase from Clostridium botulinum (strain Alaska E43 / Type E3).